Consider the following 134-residue polypeptide: Syncollin (134 aa).

The N-terminal stretch at 1–21 (MSPLRPLLLALALASVPCAQG) is a signal peptide.

As to quaternary structure, monomer and homooligomer; most probably hexameric. Interacts with GP2. Post-translationally, contains intrachain disulfide bonds.

The protein resides in the zymogen granule membrane. It localises to the zymogen granule lumen. Functionally, functions in exocytosis in pancreatic acinar cells regulating the fusion of zymogen granules with each other. May have a pore-forming activity on membranes and regulate exocytosis in other exocrine tissues. This is Syncollin (SYCN) from Homo sapiens (Human).